Here is a 101-residue protein sequence, read N- to C-terminus: Large ribosomal subunit protein uL23 (101 aa).

The protein belongs to the universal ribosomal protein uL23 family. In terms of assembly, part of the 50S ribosomal subunit. Contacts protein L29, and trigger factor when it is bound to the ribosome.

In terms of biological role, one of the early assembly proteins it binds 23S rRNA. One of the proteins that surrounds the polypeptide exit tunnel on the outside of the ribosome. Forms the main docking site for trigger factor binding to the ribosome. The chain is Large ribosomal subunit protein uL23 from Corynebacterium glutamicum (strain R).